Consider the following 138-residue polypeptide: Ribosome-binding factor A (138 aa).

Belongs to the RbfA family. Monomer. Binds 30S ribosomal subunits, but not 50S ribosomal subunits or 70S ribosomes.

It localises to the cytoplasm. One of several proteins that assist in the late maturation steps of the functional core of the 30S ribosomal subunit. Associates with free 30S ribosomal subunits (but not with 30S subunits that are part of 70S ribosomes or polysomes). Required for efficient processing of 16S rRNA. May interact with the 5'-terminal helix region of 16S rRNA. The chain is Ribosome-binding factor A from Chromobacterium violaceum (strain ATCC 12472 / DSM 30191 / JCM 1249 / CCUG 213 / NBRC 12614 / NCIMB 9131 / NCTC 9757 / MK).